Reading from the N-terminus, the 360-residue chain is D-alanine--D-alanine ligase (360 aa).

Residues 139–344 (KDVFAQAGLA…YPELIEKLVS (206 aa)) form the ATP-grasp domain. 172–227 (EQVLGYPCFVKPANMGSSVGISKCRSKEELQTAFDLAFQYDRRVVVEEGVVGREIE) serves as a coordination point for ATP. Residues aspartate 298, glutamate 311, and asparagine 313 each contribute to the Mg(2+) site.

It belongs to the D-alanine--D-alanine ligase family. Mg(2+) serves as cofactor. Mn(2+) is required as a cofactor.

The protein resides in the cytoplasm. It carries out the reaction 2 D-alanine + ATP = D-alanyl-D-alanine + ADP + phosphate + H(+). It functions in the pathway cell wall biogenesis; peptidoglycan biosynthesis. Functionally, cell wall formation. The sequence is that of D-alanine--D-alanine ligase from Bacillus pumilus (strain SAFR-032).